We begin with the raw amino-acid sequence, 378 residues long: Dihydroorotate dehydrogenase (quinone) (378 aa).

FMN contacts are provided by residues 79–83 and Thr-103; that span reads PGYDK. Lys-83 provides a ligand contact to substrate. A substrate-binding site is contributed by 128 to 132; sequence NRMGF. FMN is bound by residues Asn-160 and Asn-193. A substrate-binding site is contributed by Asn-193. Ser-196 functions as the Nucleophile in the catalytic mechanism. Asn-198 contacts substrate. The FMN site is built by Lys-231 and Thr-259. Position 260–261 (260–261) interacts with substrate; that stretch reads NT. FMN-binding positions include Gly-289, Gly-318, and 339 to 340; that span reads YT.

The protein belongs to the dihydroorotate dehydrogenase family. Type 2 subfamily. Monomer. It depends on FMN as a cofactor.

Its subcellular location is the cell membrane. It carries out the reaction (S)-dihydroorotate + a quinone = orotate + a quinol. Its pathway is pyrimidine metabolism; UMP biosynthesis via de novo pathway; orotate from (S)-dihydroorotate (quinone route): step 1/1. In terms of biological role, catalyzes the conversion of dihydroorotate to orotate with quinone as electron acceptor. This is Dihydroorotate dehydrogenase (quinone) from Trichodesmium erythraeum (strain IMS101).